Consider the following 307-residue polypeptide: Aspartate carbamoyltransferase catalytic subunit (307 aa).

R54 and T55 together coordinate carbamoyl phosphate. K83 contacts L-aspartate. Residues R104, H132, and Q135 each coordinate carbamoyl phosphate. R165 and R228 together coordinate L-aspartate. Residues L267 and P268 each contribute to the carbamoyl phosphate site.

It belongs to the aspartate/ornithine carbamoyltransferase superfamily. ATCase family. Heterododecamer (2C3:3R2) of six catalytic PyrB chains organized as two trimers (C3), and six regulatory PyrI chains organized as three dimers (R2).

It catalyses the reaction carbamoyl phosphate + L-aspartate = N-carbamoyl-L-aspartate + phosphate + H(+). It participates in pyrimidine metabolism; UMP biosynthesis via de novo pathway; (S)-dihydroorotate from bicarbonate: step 2/3. Functionally, catalyzes the condensation of carbamoyl phosphate and aspartate to form carbamoyl aspartate and inorganic phosphate, the committed step in the de novo pyrimidine nucleotide biosynthesis pathway. This chain is Aspartate carbamoyltransferase catalytic subunit, found in Clostridium botulinum (strain Langeland / NCTC 10281 / Type F).